A 226-amino-acid chain; its full sequence is Cytidylate kinase (226 aa).

ATP is bound at residue 10 to 18 (GPASSGKST).

This sequence belongs to the cytidylate kinase family. Type 1 subfamily.

The protein localises to the cytoplasm. The enzyme catalyses CMP + ATP = CDP + ADP. It carries out the reaction dCMP + ATP = dCDP + ADP. The polypeptide is Cytidylate kinase (Enterococcus faecalis (strain ATCC 700802 / V583)).